The following is a 104-amino-acid chain: Large ribosomal subunit protein bL21 (104 aa).

The protein belongs to the bacterial ribosomal protein bL21 family. In terms of assembly, part of the 50S ribosomal subunit. Contacts protein L20.

In terms of biological role, this protein binds to 23S rRNA in the presence of protein L20. In Allorhizobium ampelinum (strain ATCC BAA-846 / DSM 112012 / S4) (Agrobacterium vitis (strain S4)), this protein is Large ribosomal subunit protein bL21.